A 312-amino-acid chain; its full sequence is Telomere-binding protein OPG077 (312 aa).

It belongs to the orthopoxvirus OPG077 family.

The protein localises to the virion. In terms of biological role, DNA-binding protein which binds to the hairpin form of the viral telomeric sequence. Required for the production of mature virions (MV). The protein is Telomere-binding protein OPG077 (OPG077) of Monkeypox virus.